Consider the following 105-residue polypeptide: MMIRERIEEKLRAAFQPVFLEVVDESYRHNVPAGSESHFKVVLVSDRFTGERFLNRHRMIYSTLAEELSTTVHALALHTYTIKEWEGLQDTVFASPPCRGAGSIA.

This sequence belongs to the BolA/IbaG family.

Functionally, transcriptional regulator that plays an important role in general stress response. Has many effects on cell morphology, cell growth and cell division. Acts by regulating the transcription of many genes, including dacA (PBP-5), dacC (PBP-6), ampC and mreB. Probably involved in the coordination of genes that adapt the cell physiology in order to enhance cell adaptation and survival under stress conditions. Essential for normal cell morphology in stationary phase and under conditions of starvation. Also regulates a complex network of genes encoding proteins related to biofilm development, and negatively modulates flagellar biosynthesis and swimming capacity. Could be a motile/adhesive transcriptional switch, specifically involved in the transition between the planktonic and the attachment stage of biofilm formation. Overexpression produces round cell shape, impairs cell growth rate and induces biofilm development. The chain is DNA-binding transcriptional regulator BolA from Escherichia coli (strain K12).